The chain runs to 71 residues: Protein Tlp homolog (71 aa).

The segment at 30-56 (ETLQNNSLSRDQRQAIMEKNKRREESI) is disordered. Over residues 39 to 56 (RDQRQAIMEKNKRREESI) the composition is skewed to basic and acidic residues.

The protein belongs to the Tlp family.

In Desulforamulus reducens (strain ATCC BAA-1160 / DSM 100696 / MI-1) (Desulfotomaculum reducens), this protein is Protein Tlp homolog.